Reading from the N-terminus, the 316-residue chain is Ribosomal RNA small subunit methyltransferase H (316 aa).

Residues 35-37, D55, F79, D101, and Q108 each bind S-adenosyl-L-methionine; that span reads GGH.

It belongs to the methyltransferase superfamily. RsmH family.

Its subcellular location is the cytoplasm. It catalyses the reaction cytidine(1402) in 16S rRNA + S-adenosyl-L-methionine = N(4)-methylcytidine(1402) in 16S rRNA + S-adenosyl-L-homocysteine + H(+). Its function is as follows. Specifically methylates the N4 position of cytidine in position 1402 (C1402) of 16S rRNA. In Vibrio campbellii (strain ATCC BAA-1116), this protein is Ribosomal RNA small subunit methyltransferase H.